The primary structure comprises 299 residues: Lathosterol oxidase (299 aa).

3 helical membrane-spanning segments follow: residues 32-52 (ISLL…CATL), 79-99 (FTVK…LLEL), and 117-137 (IHLM…IYWI). One can recognise a Fatty acid hydroxylase domain in the interval 124–252 (VSFLFFTDML…YFTLWDRIGG (129 aa)). Residues 138 to 143 (HRGLHH) carry the Histidine box-1 motif. Positions 151–155 (HKPHH) match the Histidine box-2 motif. Residues 186 to 206 (VFPLHKVVYLGLYVLVNVWTI) traverse the membrane as a helical segment. A Histidine box-3 motif is present at residues 228-233 (HHTDHH). Ser-253 bears the Phosphoserine mark. The segment at 280 to 299 (FAENGCKGKKVGNGEFTKNK) is disordered.

Belongs to the sterol desaturase family. Requires Fe cation as cofactor.

The protein localises to the endoplasmic reticulum membrane. It carries out the reaction a Delta(7)-sterol + 2 Fe(II)-[cytochrome b5] + O2 + 2 H(+) = a Delta(5),Delta(7)-sterol + 2 Fe(III)-[cytochrome b5] + 2 H2O. The catalysed reaction is lathosterol + 2 Fe(II)-[cytochrome b5] + O2 + 2 H(+) = 7-dehydrocholesterol + 2 Fe(III)-[cytochrome b5] + 2 H2O. The enzyme catalyses 5alpha-cholesta-7,24-dien-3beta-ol + 2 Fe(II)-[cytochrome b5] + O2 + 2 H(+) = 7-dehydrodesmosterol + 2 Fe(III)-[cytochrome b5] + 2 H2O. The protein operates within steroid biosynthesis; cholesterol biosynthesis. In terms of biological role, catalyzes the penultimate step of the biosynthesis of cholesterol, the dehydrogenation of lathosterol into 7-dehydrocholesterol (7-DHC). Cholesterol is the major sterol component in mammalian membranes and a precursor for bile acid and steroid hormone synthesis. In addition to its essential role in cholesterol biosynthesis, it also indirectly regulates ferroptosis through the production of 7-DHC. By diverting the spread of damage caused by peroxyl radicals from the phospholipid components to its sterol nucleus, 7-DHC prevents this form of cell death. The polypeptide is Lathosterol oxidase (Mus musculus (Mouse)).